The sequence spans 235 residues: Glycerol-3-phosphate acyltransferase (235 aa).

Helical transmembrane passes span Leu4–Gly24, Ala56–Phe76, Val90–Ala110, Phe126–Val146, Val152–Phe172, and Ile191–Ile211.

Belongs to the PlsY family. Probably interacts with PlsX.

It is found in the cell inner membrane. The catalysed reaction is an acyl phosphate + sn-glycerol 3-phosphate = a 1-acyl-sn-glycero-3-phosphate + phosphate. The protein operates within lipid metabolism; phospholipid metabolism. Functionally, catalyzes the transfer of an acyl group from acyl-phosphate (acyl-PO(4)) to glycerol-3-phosphate (G3P) to form lysophosphatidic acid (LPA). This enzyme utilizes acyl-phosphate as fatty acyl donor, but not acyl-CoA or acyl-ACP. The chain is Glycerol-3-phosphate acyltransferase from Prosthecochloris aestuarii (strain DSM 271 / SK 413).